Consider the following 108-residue polypeptide: Virion membrane protein OPG135 (108 aa).

Positions 1–22 are cleaved as a signal peptide; that stretch reads MSCYTAILKSVGGLALFQVANG. Topologically, residues 23 to 45 are intravirion; it reads AIDLCRHFFMYFCEQKLRPNSFW. The helical transmembrane segment at 46 to 66 threads the bilayer; it reads FVVVRAIASMIMYLVLGIALL. At 67–83 the chain is on the virion surface side; sequence YISEQDDKKNTNNANTN. The interval 76–108 is disordered; that stretch reads NTNNANTNNDSNSNNSNNDKRNESSINSNSSPK. The span at 77 to 92 shows a compositional bias: low complexity; it reads TNNANTNNDSNSNNSN. N-linked (GlcNAc...) asparagine; by host glycosylation is found at Asn-84, Asn-89, and Asn-97. Positions 99–108 are enriched in polar residues; it reads SSINSNSSPK.

This sequence belongs to the oerthopoxvirus OPG135 family.

It is found in the virion membrane. Its subcellular location is the host cytoplasm. Envelope protein. Required for an early step in virion morphogenesis. This is Virion membrane protein OPG135 (OPG135) from Vaccinia virus (strain Western Reserve) (VACV).